A 216-amino-acid chain; its full sequence is NADH-quinone oxidoreductase subunit C (216 aa).

It belongs to the complex I 30 kDa subunit family. NDH-1 is composed of 14 different subunits. Subunits NuoB, C, D, E, F, and G constitute the peripheral sector of the complex.

The protein localises to the cell inner membrane. It carries out the reaction a quinone + NADH + 5 H(+)(in) = a quinol + NAD(+) + 4 H(+)(out). Functionally, NDH-1 shuttles electrons from NADH, via FMN and iron-sulfur (Fe-S) centers, to quinones in the respiratory chain. The immediate electron acceptor for the enzyme in this species is believed to be ubiquinone. Couples the redox reaction to proton translocation (for every two electrons transferred, four hydrogen ions are translocated across the cytoplasmic membrane), and thus conserves the redox energy in a proton gradient. The sequence is that of NADH-quinone oxidoreductase subunit C from Francisella tularensis subsp. holarctica (strain OSU18).